We begin with the raw amino-acid sequence, 516 residues long: Chromosomal replication initiator protein DnaA (516 aa).

A domain I, interacts with DnaA modulators region spans residues 1–72 (MSLEHWNLCL…LLSEFAGDDL (72 aa)). The interval 72-179 (LAPALKLAVK…QVEGGINHGA (108 aa)) is domain II. Residues 180-396 (NLNNSFTFDN…GALKRVIANS (217 aa)) form a domain III, AAA+ region region. Residues G224, G226, K227, and T228 each contribute to the ATP site. Residues 397 to 516 (HFTGRAITPD…YKQLMRILTT (120 aa)) are domain IV, binds dsDNA.

Belongs to the DnaA family. Oligomerizes as a right-handed, spiral filament on DNA at oriC.

Its subcellular location is the cytoplasm. Functionally, plays an essential role in the initiation and regulation of chromosomal replication. ATP-DnaA binds to the origin of replication (oriC) to initiate formation of the DNA replication initiation complex once per cell cycle. Binds the DnaA box (a 9 base pair repeat at the origin) and separates the double-stranded (ds)DNA. Forms a right-handed helical filament on oriC DNA; dsDNA binds to the exterior of the filament while single-stranded (ss)DNA is stabiized in the filament's interior. The ATP-DnaA-oriC complex binds and stabilizes one strand of the AT-rich DNA unwinding element (DUE), permitting loading of DNA polymerase. After initiation quickly degrades to an ADP-DnaA complex that is not apt for DNA replication. Binds acidic phospholipids. The sequence is that of Chromosomal replication initiator protein DnaA from Marinomonas sp. (strain MWYL1).